The following is a 281-amino-acid chain: ATP phosphoribosyltransferase (281 aa).

This sequence belongs to the ATP phosphoribosyltransferase family. Long subfamily. The cofactor is Mg(2+).

The protein localises to the cytoplasm. The catalysed reaction is 1-(5-phospho-beta-D-ribosyl)-ATP + diphosphate = 5-phospho-alpha-D-ribose 1-diphosphate + ATP. It participates in amino-acid biosynthesis; L-histidine biosynthesis; L-histidine from 5-phospho-alpha-D-ribose 1-diphosphate: step 1/9. With respect to regulation, feedback inhibited by histidine. Catalyzes the condensation of ATP and 5-phosphoribose 1-diphosphate to form N'-(5'-phosphoribosyl)-ATP (PR-ATP). Has a crucial role in the pathway because the rate of histidine biosynthesis seems to be controlled primarily by regulation of HisG enzymatic activity. In Corynebacterium efficiens (strain DSM 44549 / YS-314 / AJ 12310 / JCM 11189 / NBRC 100395), this protein is ATP phosphoribosyltransferase.